Here is a 389-residue protein sequence, read N- to C-terminus: 3-ketoacyl-CoA thiolase (389 aa).

The active-site Acyl-thioester intermediate is the Cys-91. Residues His-343 and Cys-373 each act as proton acceptor in the active site.

The protein belongs to the thiolase-like superfamily. Thiolase family. Heterotetramer of two alpha chains (FadB) and two beta chains (FadA).

It localises to the cytoplasm. It catalyses the reaction an acyl-CoA + acetyl-CoA = a 3-oxoacyl-CoA + CoA. Its pathway is lipid metabolism; fatty acid beta-oxidation. Functionally, catalyzes the final step of fatty acid oxidation in which acetyl-CoA is released and the CoA ester of a fatty acid two carbons shorter is formed. In Citrobacter koseri (strain ATCC BAA-895 / CDC 4225-83 / SGSC4696), this protein is 3-ketoacyl-CoA thiolase.